Consider the following 156-residue polypeptide: 3-dehydroquinate dehydratase (156 aa).

The active-site Proton acceptor is the Tyr-22. Substrate is bound by residues Asn-73, His-79, and Asp-86. His-99 acts as the Proton donor in catalysis. Substrate contacts are provided by residues 100-101 (LS) and Arg-110.

This sequence belongs to the type-II 3-dehydroquinase family. In terms of assembly, homododecamer.

It catalyses the reaction 3-dehydroquinate = 3-dehydroshikimate + H2O. It functions in the pathway metabolic intermediate biosynthesis; chorismate biosynthesis; chorismate from D-erythrose 4-phosphate and phosphoenolpyruvate: step 3/7. Catalyzes a trans-dehydration via an enolate intermediate. The sequence is that of 3-dehydroquinate dehydratase from Nitratiruptor sp. (strain SB155-2).